Consider the following 302-residue polypeptide: Trans-4-hydroxy-L-proline dehydratase activating enzyme (302 aa).

Residues 14 to 297 (HDGPGIRSTV…KRLFEASNFN (284 aa)) form the Radical SAM core domain. [4Fe-4S] cluster is bound by residues C28, C32, C35, C54, C57, C60, and C93. 34–36 (WCH) serves as a coordination point for S-adenosyl-L-methionine. 4Fe-4S ferredoxin-type domains are found at residues 45-74 (KQVLYNEERCSKCEACINICPHKAIYKGET) and 75-103 (KICLDQDKCEFCETCLDYCVNNAREIVGQ). Residues G133, 183-185 (DIK), and H257 contribute to the S-adenosyl-L-methionine site.

It belongs to the organic radical-activating enzymes family. [4Fe-4S] cluster serves as cofactor.

The enzyme catalyses glycyl-[protein] + reduced [flavodoxin] + S-adenosyl-L-methionine = glycin-2-yl radical-[protein] + semiquinone [flavodoxin] + 5'-deoxyadenosine + L-methionine + H(+). Its function is as follows. Catalyzes activation of the trans-4-hydroxy-L-proline dehydratase under anaerobic conditions by generation of an organic free radical on a glycine residue, via a homolytic cleavage of S-adenosyl-L-methionine (SAM). Is involved in the anaerobic degradation of 4-hydroxyproline. In Clostridioides difficile (Peptoclostridium difficile), this protein is Trans-4-hydroxy-L-proline dehydratase activating enzyme.